A 232-amino-acid chain; its full sequence is Protein TIFY 10c (232 aa).

The interval 54 to 73 is disordered; the sequence is PPAAGAGGAFRPPPTTMNLL. Residues 114 to 149 enclose the Tify domain; the sequence is AGEKAQQLTIFYGGKVVVFENFPSTKVKDLLQIVST. The disordered stretch occupies residues 151 to 176; sequence DGVDKNTGTAATQSLPRPAHNSLPDL. Positions 156 to 165 are enriched in polar residues; that stretch reads NTGTAATQSL. The Jas signature appears at 177 to 202; the sequence is PIARRNSLHRFLEKRKGRMNANAPYQ. A Nuclear localization signal motif is present at residues 179 to 186; it reads ARRNSLHR.

Belongs to the TIFY/JAZ family. As to quaternary structure, interacts with BHLH148. Interacts with COI1B in a coronatine-dependent manner. Coronatine is an analog of jasmonoyl isoleucine (JA-Ile). Interacts with TIFY5/JAZ2, TIFY6B/JAZ4, TIFY9/JAZ5, TIFY11A, TIFY11D/JAZ12 and TIFY11G/JAZ15. Ubiquitinated. Increase in jasmonoyl isoleucine (JA-Ile) levels mediates its degradation via COI1B-mediated proteasome pathway.

It localises to the nucleus. Its subcellular location is the cytoplasm. It is found in the cytosol. In terms of biological role, repressor of jasmonate (JA) responses. Acts as a repressor of JA-induced resistance to the bacterial blight pathogen Xanthomonas oryzae pv. oryzae (Xoo). Regulates JA-induced accumulation of linalool at the transcriptional level of linalool synthase gene LIS. Linalool is important for resistance to bacterial blight pathogen Xoo. This chain is Protein TIFY 10c, found in Oryza sativa subsp. indica (Rice).